The following is a 683-amino-acid chain: DNA-directed RNA polymerase subunit beta' (683 aa).

Zn(2+) contacts are provided by C69, C71, C87, and C90. Mg(2+)-binding residues include D489, D491, and D493.

This sequence belongs to the RNA polymerase beta' chain family. RpoC1 subfamily. In plastids the minimal PEP RNA polymerase catalytic core is composed of four subunits: alpha, beta, beta', and beta''. When a (nuclear-encoded) sigma factor is associated with the core the holoenzyme is formed, which can initiate transcription. The cofactor is Mg(2+). It depends on Zn(2+) as a cofactor.

The protein localises to the plastid. It localises to the chloroplast. It catalyses the reaction RNA(n) + a ribonucleoside 5'-triphosphate = RNA(n+1) + diphosphate. In terms of biological role, DNA-dependent RNA polymerase catalyzes the transcription of DNA into RNA using the four ribonucleoside triphosphates as substrates. The chain is DNA-directed RNA polymerase subunit beta' from Triticum aestivum (Wheat).